The primary structure comprises 44 residues: Somatoliberin (44 aa).

Leucine 44 is subject to Leucine amide.

It belongs to the glucagon family.

It localises to the secreted. GRF is released by the hypothalamus and acts on the adenohypophyse to stimulate the secretion of growth hormone. The sequence is that of Somatoliberin (GHRH) from Ovis aries (Sheep).